The sequence spans 132 residues: Small ribosomal subunit protein uS8c (132 aa).

This sequence belongs to the universal ribosomal protein uS8 family. Part of the 30S ribosomal subunit.

It localises to the plastid. The protein localises to the chloroplast. One of the primary rRNA binding proteins, it binds directly to 16S rRNA central domain where it helps coordinate assembly of the platform of the 30S subunit. The chain is Small ribosomal subunit protein uS8c (rps8) from Physcomitrium patens (Spreading-leaved earth moss).